Consider the following 327-residue polypeptide: Undecaprenyl-phosphate 4-deoxy-4-formamido-L-arabinose transferase (327 aa).

Topologically, residues 1–235 are cytoplasmic; it reads MFDAAPIKKV…TCLTTTPLRL (235 aa). Residues 236 to 256 form a helical membrane-spanning segment; sequence LSLLGSVIAIGGFSLSVLLIV. At 257-269 the chain is on the periplasmic side; it reads LRLALGPQWAAEG. Residues 270–290 form a helical membrane-spanning segment; the sequence is VFMLFAVLFTFIGAQFIGMGL. Over 291 to 327 the chain is Cytoplasmic; it reads LGEYIGRIYNDVRARPRYFVQQVIYPESTPFTEESHQ.

Belongs to the glycosyltransferase 2 family.

It is found in the cell inner membrane. The enzyme catalyses UDP-4-deoxy-4-formamido-beta-L-arabinose + di-trans,octa-cis-undecaprenyl phosphate = 4-deoxy-4-formamido-alpha-L-arabinopyranosyl di-trans,octa-cis-undecaprenyl phosphate + UDP. It functions in the pathway glycolipid biosynthesis; 4-amino-4-deoxy-alpha-L-arabinose undecaprenyl phosphate biosynthesis; 4-amino-4-deoxy-alpha-L-arabinose undecaprenyl phosphate from UDP-4-deoxy-4-formamido-beta-L-arabinose and undecaprenyl phosphate: step 1/2. It participates in bacterial outer membrane biogenesis; lipopolysaccharide biosynthesis. Functionally, catalyzes the transfer of 4-deoxy-4-formamido-L-arabinose from UDP to undecaprenyl phosphate. The modified arabinose is attached to lipid A and is required for resistance to polymyxin and cationic antimicrobial peptides. This is Undecaprenyl-phosphate 4-deoxy-4-formamido-L-arabinose transferase from Salmonella dublin (strain CT_02021853).